The following is a 197-amino-acid chain: Endonuclease V (197 aa).

Mg(2+)-binding residues include D37 and E101.

It belongs to the endonuclease V family. It depends on Mg(2+) as a cofactor.

Its subcellular location is the cytoplasm. It catalyses the reaction Endonucleolytic cleavage at apurinic or apyrimidinic sites to products with a 5'-phosphate.. Functionally, DNA repair enzyme involved in the repair of deaminated bases. Selectively cleaves double-stranded DNA at the second phosphodiester bond 3' to a deoxyinosine leaving behind the intact lesion on the nicked DNA. The sequence is that of Endonuclease V from Thermococcus kodakarensis (strain ATCC BAA-918 / JCM 12380 / KOD1) (Pyrococcus kodakaraensis (strain KOD1)).